Consider the following 347-residue polypeptide: UPF0284 protein M1425_0030 (347 aa).

This sequence belongs to the UPF0284 family.

The protein is UPF0284 protein M1425_0030 of Saccharolobus islandicus (strain M.14.25 / Kamchatka #1) (Sulfolobus islandicus).